Consider the following 334-residue polypeptide: Glycerol-3-phosphate dehydrogenase [NAD(P)+] (334 aa).

NADPH is bound by residues Trp-13, Arg-33, and Lys-106. Lys-106, Gly-137, and Ser-139 together coordinate sn-glycerol 3-phosphate. Ala-141 serves as a coordination point for NADPH. 5 residues coordinate sn-glycerol 3-phosphate: Lys-192, Asp-245, Ser-255, Arg-256, and Asn-257. The active-site Proton acceptor is the Lys-192. Arg-256 is a binding site for NADPH. The NADPH site is built by Val-280 and Glu-282.

It belongs to the NAD-dependent glycerol-3-phosphate dehydrogenase family.

The protein localises to the cytoplasm. The enzyme catalyses sn-glycerol 3-phosphate + NAD(+) = dihydroxyacetone phosphate + NADH + H(+). The catalysed reaction is sn-glycerol 3-phosphate + NADP(+) = dihydroxyacetone phosphate + NADPH + H(+). It participates in membrane lipid metabolism; glycerophospholipid metabolism. Its function is as follows. Catalyzes the reduction of the glycolytic intermediate dihydroxyacetone phosphate (DHAP) to sn-glycerol 3-phosphate (G3P), the key precursor for phospholipid synthesis. This Chlamydia muridarum (strain MoPn / Nigg) protein is Glycerol-3-phosphate dehydrogenase [NAD(P)+].